The sequence spans 300 residues: GTPase Era (300 aa).

The 168-residue stretch at 5-172 folds into the Era-type G domain; that stretch reads HSGFVAIIGR…LTALTDALPV (168 aa). The G1 stretch occupies residues 13-20; it reads GRPNVGKS. A GTP-binding site is contributed by 13 to 20; that stretch reads GRPNVGKS. Residues 39-43 are G2; the sequence is QTTRN. The tract at residues 60–63 is G3; that stretch reads DTPG. Residues 60–64 and 122–125 each bind GTP; these read DTPGI and NKID. Residues 122–125 are G4; the sequence is NKID. The segment at 151-153 is G5; that stretch reads ISA. The KH type-2 domain maps to 203-280; that stretch reads TRDEVPHAVA…NLKLWVRVQK (78 aa).

This sequence belongs to the TRAFAC class TrmE-Era-EngA-EngB-Septin-like GTPase superfamily. Era GTPase family. As to quaternary structure, monomer.

The protein resides in the cytoplasm. It localises to the cell membrane. In terms of biological role, an essential GTPase that binds both GDP and GTP, with rapid nucleotide exchange. Plays a role in 16S rRNA processing and 30S ribosomal subunit biogenesis and possibly also in cell cycle regulation and energy metabolism. This is GTPase Era from Lacticaseibacillus paracasei (strain ATCC 334 / BCRC 17002 / CCUG 31169 / CIP 107868 / KCTC 3260 / NRRL B-441) (Lactobacillus paracasei).